Reading from the N-terminus, the 417-residue chain is UDP-N-acetylmuramoylalanine--D-glutamate ligase (417 aa).

Residue 104-110 participates in ATP binding; the sequence is GSNGKST.

Belongs to the MurCDEF family.

The protein localises to the cytoplasm. The catalysed reaction is UDP-N-acetyl-alpha-D-muramoyl-L-alanine + D-glutamate + ATP = UDP-N-acetyl-alpha-D-muramoyl-L-alanyl-D-glutamate + ADP + phosphate + H(+). Its pathway is cell wall biogenesis; peptidoglycan biosynthesis. Its function is as follows. Cell wall formation. Catalyzes the addition of glutamate to the nucleotide precursor UDP-N-acetylmuramoyl-L-alanine (UMA). This Francisella tularensis subsp. novicida (strain U112) protein is UDP-N-acetylmuramoylalanine--D-glutamate ligase.